Here is a 462-residue protein sequence, read N- to C-terminus: Zinc transporter zipt-7.2 (462 aa).

Residues 2–22 (LVKSCIFLSFLAIAAYGQAHL) form a helical membrane-spanning segment. Residues 39–134 (HHQGHGHAHG…HGHSHGAESA (96 aa)) are disordered. Positions 40–51 (HQGHGHAHGGHG) are enriched in basic residues. The span at 65-74 (AAAAEAATAA) shows a compositional bias: low complexity. The span at 75-94 (AHDHGHAHDHDHGHAHDHGH) shows a compositional bias: basic and acidic residues. Residues 111–120 (HGHAHDHHGH) show a composition bias toward basic residues. Residues 121–132 (SHEDHGHSHGAE) are compositionally biased toward basic and acidic residues. A helical transmembrane segment spans residues 161-181 (AISATLLISAAPCFILMFIPI). Residue Asn184 is glycosylated (N-linked (GlcNAc...) asparagine). A helical membrane pass occupies residues 194–214 (VLLAFGSGGLLGDAFLHLIPH). The segment at 219–239 (GDGHGHSHSHGHSHGGGGHSH) is disordered. A helical membrane pass occupies residues 244-264 (MSVGGWVLGGIIAFLTVEKLV). A disordered region spans residues 270-307 (EDGHGHSHGHSHGGEKKETKEKDSKDKVAKKEEKPEKD). Residues 281 to 307 (HGGEKKETKEKDSKDKVAKKEEKPEKD) show a composition bias toward basic and acidic residues. The N-linked (GlcNAc...) asparagine glycan is linked to Asn326. 3 helical membrane passes run 333–353 (IGASFIAGTTVGIVTMITVLV), 376–396 (AMLIQLVTALGALSGCVISLF), and 410–430 (SWVLPFTAGGFIYIATVSVIP). Asn435 is a glycosylation site (N-linked (GlcNAc...) asparagine). A helical membrane pass occupies residues 441–461 (TVKEIFAILTGIFLMYLIAIY).

It belongs to the ZIP transporter (TC 2.A.5) family. KE4/Catsup subfamily. In terms of tissue distribution, expressed in somatic tissues.

It is found in the membrane. In terms of biological role, zinc transporter. This Caenorhabditis elegans protein is Zinc transporter zipt-7.2.